The sequence spans 287 residues: Mitochondrial glycine transporter B (287 aa).

Solcar repeat units follow at residues 7–97 (HPAL…LKQH), 104–188 (PSAG…AKKA), and 198–282 (IAPL…LMAR). The next 6 helical transmembrane spans lie at 13 to 38 (FMCG…TRLQ), 72 to 98 (GVSP…KQHY), 110 to 135 (VLLG…TRFE), 163 to 186 (GLTA…SQAK), 202 to 228 (VNFG…KTHM), and 257 to 275 (GAVP…AWTV).

It belongs to the mitochondrial carrier (TC 2.A.29) family. SLC25A38 subfamily. As to expression, at 24 hours post-fertilization, expressed predominantly in posterior blood island, posterior cardinal vein and circulating blood. At 34 hours post-fertilization, becomes restricted to posterior blood island and circulating blood.

Its subcellular location is the mitochondrion inner membrane. The catalysed reaction is glycine(in) = glycine(out). In terms of biological role, mitochondrial glycine transporter that imports glycine into the mitochondrial matrix. Plays an important role in providing glycine for the first enzymatic step in heme biosynthesis, the condensation of glycine with succinyl-CoA to produce 5-aminolevulinate (ALA) in the mitochondrial matrix. Required during erythropoiesis. Functionally, may play a role as pro-apoptotic protein that induces caspase-dependent apoptosis. The polypeptide is Mitochondrial glycine transporter B (slc25a38b) (Danio rerio (Zebrafish)).